A 78-amino-acid chain; its full sequence is Large ribosomal subunit protein bL28 (78 aa).

A disordered region spans residues 1-21; the sequence is MSRVCQVTGKRPVSGNNRSHA.

Belongs to the bacterial ribosomal protein bL28 family.

This chain is Large ribosomal subunit protein bL28, found in Sodalis glossinidius (strain morsitans).